Consider the following 225-residue polypeptide: MEPIKNLPRLGRILGYQFQQIALLEQALTHRSAASKHNERLEFLGDSILSIVISDALYHQFPKATEGDLSRMRATLVCGKMLAEIAKEFKLGDYLKLGPGELKSGGFRRESILADAMEAIIGAIYLDADIETCRTLVLNWYKSRLAVIEPVNQKDPKTLLQEHLQGFKQPLPVYTVVNISGEAHAQTFTVECKVEQLKEAVIGVANSRRKAEQIAAAEVLERIKK.

An RNase III domain is found at 7-129 (LPRLGRILGY…IIGAIYLDAD (123 aa)). Mg(2+) is bound at residue Glu-42. Asp-46 is an active-site residue. Residues Asp-115 and Glu-118 each coordinate Mg(2+). The active site involves Glu-118. The DRBM domain maps to 155-225 (DPKTLLQEHL…AAEVLERIKK (71 aa)).

This sequence belongs to the ribonuclease III family. Homodimer. Mg(2+) serves as cofactor.

The protein resides in the cytoplasm. It carries out the reaction Endonucleolytic cleavage to 5'-phosphomonoester.. Its function is as follows. Digests double-stranded RNA. Involved in the processing of primary rRNA transcript to yield the immediate precursors to the large and small rRNAs (23S and 16S). Processes some mRNAs, and tRNAs when they are encoded in the rRNA operon. Processes pre-crRNA and tracrRNA of type II CRISPR loci if present in the organism. This chain is Ribonuclease 3, found in Shewanella loihica (strain ATCC BAA-1088 / PV-4).